Reading from the N-terminus, the 159-residue chain is SsrA-binding protein (159 aa).

The protein belongs to the SmpB family.

It localises to the cytoplasm. In terms of biological role, required for rescue of stalled ribosomes mediated by trans-translation. Binds to transfer-messenger RNA (tmRNA), required for stable association of tmRNA with ribosomes. tmRNA and SmpB together mimic tRNA shape, replacing the anticodon stem-loop with SmpB. tmRNA is encoded by the ssrA gene; the 2 termini fold to resemble tRNA(Ala) and it encodes a 'tag peptide', a short internal open reading frame. During trans-translation Ala-aminoacylated tmRNA acts like a tRNA, entering the A-site of stalled ribosomes, displacing the stalled mRNA. The ribosome then switches to translate the ORF on the tmRNA; the nascent peptide is terminated with the 'tag peptide' encoded by the tmRNA and targeted for degradation. The ribosome is freed to recommence translation, which seems to be the essential function of trans-translation. This Coxiella burnetii (strain RSA 331 / Henzerling II) protein is SsrA-binding protein.